The chain runs to 234 residues: Enolase-phosphatase E1 (234 aa).

Residues 212–234 form a disordered region; the sequence is RPGNYPQPQHSHFKISSFEGLNP.

This sequence belongs to the HAD-like hydrolase superfamily. MasA/MtnC family. In terms of assembly, monomer. Requires Mg(2+) as cofactor.

The enzyme catalyses 5-methylsulfanyl-2,3-dioxopentyl phosphate + H2O = 1,2-dihydroxy-5-(methylsulfanyl)pent-1-en-3-one + phosphate. The protein operates within amino-acid biosynthesis; L-methionine biosynthesis via salvage pathway; L-methionine from S-methyl-5-thio-alpha-D-ribose 1-phosphate: step 3/6. It participates in amino-acid biosynthesis; L-methionine biosynthesis via salvage pathway; L-methionine from S-methyl-5-thio-alpha-D-ribose 1-phosphate: step 4/6. Bifunctional enzyme that catalyzes the enolization of 2,3-diketo-5-methylthiopentyl-1-phosphate (DK-MTP-1-P) into the intermediate 2-hydroxy-3-keto-5-methylthiopentenyl-1-phosphate (HK-MTPenyl-1-P), which is then dephosphorylated to form the acireductone 1,2-dihydroxy-3-keto-5-methylthiopentene (DHK-MTPene). The sequence is that of Enolase-phosphatase E1 from Leptospira interrogans serogroup Icterohaemorrhagiae serovar copenhageni (strain Fiocruz L1-130).